Consider the following 68-residue polypeptide: UPF0337 protein RB10934 (68 aa).

Belongs to the UPF0337 (CsbD) family.

In Rhodopirellula baltica (strain DSM 10527 / NCIMB 13988 / SH1), this protein is UPF0337 protein RB10934.